The chain runs to 657 residues: Histidine ammonia-lyase (657 aa).

The 5-imidazolinone (Ala-Gly) cross-link spans 253 to 255 (ASG). Residue Ser254 is modified to 2,3-didehydroalanine (Ser). Residue Thr396 is modified to Phosphothreonine. At Ser635 the chain carries Phosphoserine. The residue at position 637 (Thr637) is a Phosphothreonine. At Ser648 the chain carries Phosphoserine.

The protein belongs to the PAL/histidase family. Post-translationally, contains an active site 4-methylidene-imidazol-5-one (MIO), which is formed autocatalytically by cyclization and dehydration of residues Ala-Ser-Gly.

It carries out the reaction L-histidine = trans-urocanate + NH4(+). Its pathway is amino-acid degradation; L-histidine degradation into L-glutamate; N-formimidoyl-L-glutamate from L-histidine: step 1/3. This chain is Histidine ammonia-lyase (HAL), found in Bos taurus (Bovine).